A 921-amino-acid polypeptide reads, in one-letter code: Protein translocase subunit SecA (921 aa).

ATP contacts are provided by residues Gln-87, 105–109 (GEGKT), and Asp-516. Zn(2+) contacts are provided by Cys-905, Cys-907, Cys-916, and His-917.

The protein belongs to the SecA family. In terms of assembly, monomer and homodimer. Part of the essential Sec protein translocation apparatus which comprises SecA, SecYEG and auxiliary proteins SecDF-YajC and YidC. Requires Zn(2+) as cofactor.

Its subcellular location is the cell inner membrane. It is found in the cytoplasm. The enzyme catalyses ATP + H2O + cellular proteinSide 1 = ADP + phosphate + cellular proteinSide 2.. In terms of biological role, part of the Sec protein translocase complex. Interacts with the SecYEG preprotein conducting channel. Has a central role in coupling the hydrolysis of ATP to the transfer of proteins into and across the cell membrane, serving both as a receptor for the preprotein-SecB complex and as an ATP-driven molecular motor driving the stepwise translocation of polypeptide chains across the membrane. The polypeptide is Protein translocase subunit SecA (Polaromonas sp. (strain JS666 / ATCC BAA-500)).